The sequence spans 1052 residues: 3-hydroxy-3-methylglutaryl coenzyme A reductase mokG (1052 aa).

A run of 6 helical transmembrane segments spans residues 223–243 (VDMA…VSLF), 253–273 (FWLA…GLGV), 279–299 (VPVD…TVGF), 349–369 (GWSI…GAVF), 378–398 (FCFL…TFYA), and 440–460 (WKLI…SSFF). The region spanning 224–403 (DMAIIGLGYL…FTFYATILCV (180 aa)) is the SSD domain. The linker stretch occupies residues 461–617 (YRIMGGFMTN…FKANQAESLT (157 aa)). Residues 571–594 (APKESAAPAPPSSPASVPSAVPVP) are disordered. Over residues 584–594 (PASVPSAVPVP) the composition is skewed to low complexity. The tract at residues 618–1044 (DDELAELCLR…LVNAHMRHNR (427 aa)) is catalytic. The active-site Charge relay system is Glu-734. Residue Asn-798 is glycosylated (N-linked (GlcNAc...) asparagine). Active-site charge relay system residues include Lys-867 and Asp-943. The active-site Proton donor is His-1039. N-linked (GlcNAc...) asparagine glycosylation is present at Asn-1043.

This sequence belongs to the HMG-CoA reductase family.

The protein resides in the endoplasmic reticulum membrane. The catalysed reaction is (R)-mevalonate + 2 NADP(+) + CoA = (3S)-3-hydroxy-3-methylglutaryl-CoA + 2 NADPH + 2 H(+). It participates in polyketide biosynthesis; lovastatin biosynthesis. HMG-CoA reductase; part of the gene cluster that mediates the biosynthesis of monakolin K, also known as lovastatin, and which acts as a potent competitive inhibitor of HMG-CoA reductase. Monakolin K biosynthesis is performed in two stages. The first stage is catalyzed by the nonaketide synthase mokA, which belongs to type I polyketide synthases and catalyzes the iterative nine-step formation of the polyketide. This PKS stage is completed by the action of dehydrogenase mokE, which catalyzes the NADPH-dependent reduction of the unsaturated tetra-, penta- and heptaketide intermediates that arise during the mokA-mediated biosynthesis of the nonaketide chain and leads to dihydromonacolin L. Covalently bound dihydromonacolin L is released from mokA by the mokD esterase. Conversion of dihydromonacolin L into monacolin L and then monacolin J is subsequently performed with the participation of molecular oxygen and P450 monoogygenase mokC. Finally, mokF performs the conversion of monacoline J to monacoline K through the addition of the side-chain diketide moiety (2R)-2-methylbutanoate produced by the diketide synthase mokB. HMG-CoA reductase mokG may act as a down-regulator of monacolin K production. This chain is 3-hydroxy-3-methylglutaryl coenzyme A reductase mokG, found in Monascus pilosus (Red mold).